A 159-amino-acid polypeptide reads, in one-letter code: MRPLVIILMGSSSDMGHAEKIASELKTFGIEYAIRIGSAHKTAEHVVSMLKEYEALDRPKLYITIAGRSNALSGFVDGFVKGATIACPPPSDSFAGADIYSSLRMPSGISPALVLEPKNAALLAARIFSLYDKEIADSVKSYMESNAQKIIEDDSKLKR.

Positions 11, 14, 38, 41, 67, and 69 each coordinate substrate.

The enzyme catalyses 5-amino-1-(5-phospho-D-ribosyl)imidazole-4-carboxylate + H(+) = 5-amino-1-(5-phospho-beta-D-ribosyl)imidazole + CO2. It functions in the pathway purine metabolism; IMP biosynthesis via de novo pathway; 5-amino-1-(5-phospho-D-ribosyl)imidazole-4-carboxylate from 5-amino-1-(5-phospho-D-ribosyl)imidazole (carboxylase route): step 1/1. Catalyzes the reversible conversion of 5-aminoimidazole ribonucleotide (AIR) and CO(2) to 4-carboxy-5-aminoimidazole ribonucleotide (CAIR). Does not accept N5-carboxyaminoimidazole ribonucleotide (N5-CAIR) as a substrate. The chain is Phosphoribosylaminoimidazole carboxylase from Treponema denticola (strain ATCC 35405 / DSM 14222 / CIP 103919 / JCM 8153 / KCTC 15104).